Here is a 302-residue protein sequence, read N- to C-terminus: Pantothenate synthetase 4 (302 aa).

Position 51–58 (M51–H58) interacts with ATP. Catalysis depends on H58, which acts as the Proton donor. Q82 serves as a coordination point for (R)-pantoate. Q82 lines the beta-alanine pocket. G166–D169 provides a ligand contact to ATP. Q172 is a (R)-pantoate binding site. ATP-binding positions include A195 and R203–R206.

It belongs to the pantothenate synthetase family. In terms of assembly, homodimer.

Its subcellular location is the cytoplasm. The catalysed reaction is (R)-pantoate + beta-alanine + ATP = (R)-pantothenate + AMP + diphosphate + H(+). It functions in the pathway cofactor biosynthesis; (R)-pantothenate biosynthesis; (R)-pantothenate from (R)-pantoate and beta-alanine: step 1/1. Catalyzes the condensation of pantoate with beta-alanine in an ATP-dependent reaction via a pantoyl-adenylate intermediate. The polypeptide is Pantothenate synthetase 4 (Frankia alni (strain DSM 45986 / CECT 9034 / ACN14a)).